The chain runs to 246 residues: Azurocidin (246 aa).

A signal peptide spans 1-19 (MPALRFLALLASLLATSRV). The propeptide occupies 20–26 (GLATLAD). Residues 27–242 (IVGGRRAQPQ…FRNWIDSVLN (216 aa)) enclose the Peptidase S1 domain. Residues Cys-52 and Cys-68 are joined by a disulfide bond. Residues Asn-139 and Asn-170 are each glycosylated (N-linked (GlcNAc...) asparagine). Cystine bridges form between Cys-148–Cys-205 and Cys-178–Cys-184. A propeptide spanning residues 245-246 (PA) is cleaved from the precursor.

It belongs to the peptidase S1 family. Elastase subfamily.

It localises to the cytoplasmic granule membrane. Functionally, this is a neutrophil granule-derived antibacterial and monocyte- and fibroblast-specific chemotactic glycoprotein. Binds heparin. The protein is Azurocidin of Sus scrofa (Pig).